A 122-amino-acid chain; its full sequence is UPF0102 protein Mpe_A3766 (122 aa).

This sequence belongs to the UPF0102 family.

This Methylibium petroleiphilum (strain ATCC BAA-1232 / LMG 22953 / PM1) protein is UPF0102 protein Mpe_A3766.